We begin with the raw amino-acid sequence, 290 residues long: uncharacterized protein (290 aa).

3 disordered regions span residues 89–157 (CSEN…EELS), 172–217 (MANT…MESS), and 261–290 (TANT…AVKK). Basic and acidic residues-rich tracts occupy residues 106-124 (DFSK…EKQP) and 142-152 (KTEKLVSKEPS). Composition is skewed to polar residues over residues 172–183 (MANTSSSANRTG) and 193–202 (KPTTAVQAST). Composition is skewed to low complexity over residues 207–217 (MSSAESAMESS) and 274–290 (PSSE…AVKK).

This is an uncharacterized protein from Caenorhabditis elegans.